The following is a 272-amino-acid chain: PHD finger protein ALFIN-LIKE 6 (272 aa).

The span at 1-23 (MEGGGGGGGGGGGGGGGGGGGGA) shows a compositional bias: gly residues. Disordered stretches follow at residues 1-24 (MEGG…GGAP) and 162-218 (QAKE…DNTL). The span at 168–182 (PNSSSKSNKPSSKVQ) shows a compositional bias: low complexity. A compositionally biased stretch (basic and acidic residues) spans 183-200 (SKAESRSKSKLSAPKDEE). The span at 201-214 (GSGDDEGEEEEDDH) shows a compositional bias: acidic residues. A PHD-type zinc finger spans residues 216-268 (NTLCGTCGTNDGKDEFWICCDNCEKWYHGKCVKITPARAEHIKQYKCPDCTNK).

Belongs to the Alfin family.

The protein localises to the nucleus. In terms of biological role, histone-binding component that specifically recognizes H3 tails trimethylated on 'Lys-4' (H3K4me3), which mark transcription start sites of virtually all active genes. The chain is PHD finger protein ALFIN-LIKE 6 from Oryza sativa subsp. japonica (Rice).